Reading from the N-terminus, the 177-residue chain is Alkyl hydroperoxide reductase AhpD (177 aa).

Residue C133 is the Proton donor of the active site. A disulfide bridge connects residues C133 and C136. The Cysteine sulfenic acid (-SOH) intermediate role is filled by C136.

The protein belongs to the AhpD family.

The catalysed reaction is N(6)-[(R)-dihydrolipoyl]-L-lysyl-[lipoyl-carrier protein] + a hydroperoxide = N(6)-[(R)-lipoyl]-L-lysyl-[lipoyl-carrier protein] + an alcohol + H2O. Antioxidant protein with alkyl hydroperoxidase activity. Required for the reduction of the AhpC active site cysteine residues and for the regeneration of the AhpC enzyme activity. The polypeptide is Alkyl hydroperoxide reductase AhpD (Coxiella burnetii (strain CbuG_Q212) (Coxiella burnetii (strain Q212))).